Reading from the N-terminus, the 535-residue chain is MASLSLAPVNIFKAGADEERAETARLSSFIGAIAIGDLVKSTLGPKGMDKILLSSGRDAALMVTNDGATILKNIGVDNPAAKVLVDMSRVQDDEVGDGTTSVTVLAAELLREAESLIAKKIHPQTIISGWREATKAAREALLSSAVDHGSDEARFWQDLMNIAGTTLSSKLLTHHKDHFTKLAVEAVLRLKGSGNLEAIHVIKKLGGSLADSYLDEGFLLDKKIGVNQPKRIENAKILIANTGMDTDKIKIFGSRVRVDSTAKVAEIEHAEKEKMKEKVERILKHGINCFINRQLIYNYPEQLFGAAGVMAIEHADFAGVERLALVTGGEIASTFDHPELVKLGSCKLIEEVMIGEDKLIHFSGVALGEACTIVLRGATQQILDEAERSLHDALCVLAQTVKDPRTVYGGGCSEMLMAHAVTQLANRTPGKEAVAMESFAKALRMLPTIIADNAGYDSADLVAQLRAAHSEGHITAGLDMKEGTIGDMAVLGITESFQVKRQVLLSAAEAAEVILRVDNIIKAAPRKRVPDHHPC.

An N-acetylalanine modification is found at Ala2. A Phosphoserine modification is found at Ser3. Lys13 carries the post-translational modification N6-acetyllysine. Gly44 lines the ADP pocket. An ATP-binding site is contributed by Gly44. Asp97 is a Mg(2+) binding site. ADP is bound by residues Gly98, Thr99, Thr100, Ser101, Ser168, and Ser169. Residues Gly98, Thr99, and Thr100 each contribute to the ATP site. Lys181 carries the post-translational modification N6-acetyllysine. A Glycyl lysine isopeptide (Lys-Gly) (interchain with G-Cter in SUMO2) cross-link involves residue Lys248. Ser260 is subject to Phosphoserine. Thr261 carries the phosphothreonine modification. 3 residues coordinate ADP: Gly410, Glu495, and Lys500. Positions 495 and 500 each coordinate ATP.

Belongs to the TCP-1 chaperonin family. In terms of assembly, component of the chaperonin-containing T-complex (TRiC), a hexadecamer composed of two identical back-to-back stacked rings enclosing a protein folding chamber. Each ring is made up of eight different subunits: TCP1/CCT1, CCT2, CCT3, CCT4, CCT5, CCT6A/CCT6, CCT7, CCT8. Interacts with PACRG. Interacts with FLCN. Interacts with DLEC1. Interacts with SVEP1. The N-terminus is blocked.

The protein localises to the cytoplasm. It catalyses the reaction ATP + H2O = ADP + phosphate + H(+). In terms of biological role, component of the chaperonin-containing T-complex (TRiC), a molecular chaperone complex that assists the folding of actin, tubulin and other proteins upon ATP hydrolysis. The TRiC complex mediates the folding of WRAP53/TCAB1, thereby regulating telomere maintenance. As part of the TRiC complex may play a role in the assembly of BBSome, a complex involved in ciliogenesis regulating transports vesicles to the cilia. The sequence is that of T-complex protein 1 subunit beta (Cct2) from Mus musculus (Mouse).